The following is a 177-amino-acid chain: Interleukin-1 receptor antagonist protein (177 aa).

An N-terminal signal peptide occupies residues 1–25; that stretch reads MEVCRCHHGYLISLLLFLFHSETAC. Cys91 and Cys141 are disulfide-bonded. Asn109 and Asn114 each carry an N-linked (GlcNAc...) asparagine glycan.

This sequence belongs to the IL-1 family.

The protein resides in the secreted. Anti-inflammatory antagonist of interleukin-1 family of proinflammatory cytokines such as interleukin-1beta/IL1B and interleukin-1alpha/IL1A. Protects from immune dysregulation and uncontrolled systemic inflammation triggered by IL1 for a range of innate stimulatory agents such as pathogens. The polypeptide is Interleukin-1 receptor antagonist protein (IL1RN) (Tursiops truncatus (Atlantic bottle-nosed dolphin)).